The primary structure comprises 198 residues: Leucyl/phenylalanyl-tRNA--protein transferase (198 aa).

Belongs to the L/F-transferase family.

It is found in the cytoplasm. It catalyses the reaction N-terminal L-lysyl-[protein] + L-leucyl-tRNA(Leu) = N-terminal L-leucyl-L-lysyl-[protein] + tRNA(Leu) + H(+). The enzyme catalyses N-terminal L-arginyl-[protein] + L-leucyl-tRNA(Leu) = N-terminal L-leucyl-L-arginyl-[protein] + tRNA(Leu) + H(+). The catalysed reaction is L-phenylalanyl-tRNA(Phe) + an N-terminal L-alpha-aminoacyl-[protein] = an N-terminal L-phenylalanyl-L-alpha-aminoacyl-[protein] + tRNA(Phe). In terms of biological role, functions in the N-end rule pathway of protein degradation where it conjugates Leu, Phe and, less efficiently, Met from aminoacyl-tRNAs to the N-termini of proteins containing an N-terminal arginine or lysine. In Synechocystis sp. (strain ATCC 27184 / PCC 6803 / Kazusa), this protein is Leucyl/phenylalanyl-tRNA--protein transferase.